An 81-amino-acid polypeptide reads, in one-letter code: MDPMIAQGALIGGGLIMAGGAIGAGIGDGMAGNALVSGIARQPEAQSRLFTPFFITVGLVEAAYFINLAFMALFVFATPVK.

2 helical membrane passes run 4-24 (MIAQGALIGGGLIMAGGAIGA) and 57-77 (VGLVEAAYFINLAFMALFVFA).

The protein belongs to the ATPase C chain family. In terms of assembly, F-type ATPases have 2 components, F(1) - the catalytic core - and F(0) - the membrane proton channel. F(1) has five subunits: alpha(3), beta(3), gamma(1), delta(1), epsilon(1). F(0) has three main subunits: a(1), b(2) and c(10-14). The alpha and beta chains form an alternating ring which encloses part of the gamma chain. F(1) is attached to F(0) by a central stalk formed by the gamma and epsilon chains, while a peripheral stalk is formed by the delta and b chains.

It is found in the cell membrane. Its function is as follows. F(1)F(0) ATP synthase produces ATP from ADP in the presence of a proton or sodium gradient. F-type ATPases consist of two structural domains, F(1) containing the extramembraneous catalytic core and F(0) containing the membrane proton channel, linked together by a central stalk and a peripheral stalk. During catalysis, ATP synthesis in the catalytic domain of F(1) is coupled via a rotary mechanism of the central stalk subunits to proton translocation. Functionally, key component of the F(0) channel; it plays a direct role in translocation across the membrane. A homomeric c-ring of between 10-14 subunits forms the central stalk rotor element with the F(1) delta and epsilon subunits. This Mycobacterium leprae (strain TN) protein is ATP synthase subunit c.